Consider the following 347-residue polypeptide: GMP reductase (347 aa).

Residue 108 to 131 coordinates NADP(+); that stretch reads ADFEKTVQILALNPALNFVCIDVA. Positions 181 and 183 each coordinate K(+). Cys-186 (thioimidate intermediate) is an active-site residue. An NADP(+)-binding site is contributed by 216-239; sequence IVSDGGCTMPGDVAKAFGGGADFV.

It belongs to the IMPDH/GMPR family. GuaC type 1 subfamily. As to quaternary structure, homotetramer.

The enzyme catalyses IMP + NH4(+) + NADP(+) = GMP + NADPH + 2 H(+). Its function is as follows. Catalyzes the irreversible NADPH-dependent deamination of GMP to IMP. It functions in the conversion of nucleobase, nucleoside and nucleotide derivatives of G to A nucleotides, and in maintaining the intracellular balance of A and G nucleotides. This chain is GMP reductase, found in Salmonella paratyphi C (strain RKS4594).